The following is a 167-amino-acid chain: 2-C-methyl-D-erythritol 2,4-cyclodiphosphate synthase (167 aa).

A divalent metal cation-binding residues include Asp-8 and His-10. 4-CDP-2-C-methyl-D-erythritol 2-phosphate-binding positions include 8-10 and 34-35; these read DIH and HS. His-42 contributes to the a divalent metal cation binding site. Residues 56–58 and Arg-142 each bind 4-CDP-2-C-methyl-D-erythritol 2-phosphate; that span reads DIG.

The protein belongs to the IspF family. In terms of assembly, homotrimer. Requires a divalent metal cation as cofactor.

It catalyses the reaction 4-CDP-2-C-methyl-D-erythritol 2-phosphate = 2-C-methyl-D-erythritol 2,4-cyclic diphosphate + CMP. It functions in the pathway isoprenoid biosynthesis; isopentenyl diphosphate biosynthesis via DXP pathway; isopentenyl diphosphate from 1-deoxy-D-xylulose 5-phosphate: step 4/6. Functionally, involved in the biosynthesis of isopentenyl diphosphate (IPP) and dimethylallyl diphosphate (DMAPP), two major building blocks of isoprenoid compounds. Catalyzes the conversion of 4-diphosphocytidyl-2-C-methyl-D-erythritol 2-phosphate (CDP-ME2P) to 2-C-methyl-D-erythritol 2,4-cyclodiphosphate (ME-CPP) with a corresponding release of cytidine 5-monophosphate (CMP). The chain is 2-C-methyl-D-erythritol 2,4-cyclodiphosphate synthase from Buchnera aphidicola subsp. Schizaphis graminum (strain Sg).